Reading from the N-terminus, the 401-residue chain is Argininosuccinate synthase (401 aa).

An ATP-binding site is contributed by 8 to 16 (AYSGGLDTT). Tyrosine 87 is a binding site for L-citrulline. Glycine 117 is an ATP binding site. L-aspartate is bound by residues threonine 119, asparagine 123, and aspartate 124. An L-citrulline-binding site is contributed by asparagine 123. Arginine 127, serine 175, glutamate 259, and tyrosine 271 together coordinate L-citrulline.

Belongs to the argininosuccinate synthase family. Type 1 subfamily. In terms of assembly, homotetramer.

It is found in the cytoplasm. It catalyses the reaction L-citrulline + L-aspartate + ATP = 2-(N(omega)-L-arginino)succinate + AMP + diphosphate + H(+). Its pathway is amino-acid biosynthesis; L-arginine biosynthesis; L-arginine from L-ornithine and carbamoyl phosphate: step 2/3. This chain is Argininosuccinate synthase, found in Corynebacterium glutamicum (strain ATCC 13032 / DSM 20300 / JCM 1318 / BCRC 11384 / CCUG 27702 / LMG 3730 / NBRC 12168 / NCIMB 10025 / NRRL B-2784 / 534).